We begin with the raw amino-acid sequence, 372 residues long: 4-hydroxy-3-methylbut-2-en-1-yl diphosphate synthase (flavodoxin) (372 aa).

Residues Cys270, Cys273, Cys305, and Glu312 each coordinate [4Fe-4S] cluster.

This sequence belongs to the IspG family. [4Fe-4S] cluster serves as cofactor.

It carries out the reaction (2E)-4-hydroxy-3-methylbut-2-enyl diphosphate + oxidized [flavodoxin] + H2O + 2 H(+) = 2-C-methyl-D-erythritol 2,4-cyclic diphosphate + reduced [flavodoxin]. Its pathway is isoprenoid biosynthesis; isopentenyl diphosphate biosynthesis via DXP pathway; isopentenyl diphosphate from 1-deoxy-D-xylulose 5-phosphate: step 5/6. Converts 2C-methyl-D-erythritol 2,4-cyclodiphosphate (ME-2,4cPP) into 1-hydroxy-2-methyl-2-(E)-butenyl 4-diphosphate. The chain is 4-hydroxy-3-methylbut-2-en-1-yl diphosphate synthase (flavodoxin) from Vibrio vulnificus (strain CMCP6).